Consider the following 267-residue polypeptide: NAD kinase 2 (267 aa).

Residue Asp-52 is the Proton acceptor of the active site. NAD(+) is bound by residues 52–53 (DG), 124–125 (NE), Arg-151, Asp-153, 164–169 (TAYNKS), and Ala-188.

The protein belongs to the NAD kinase family. The cofactor is a divalent metal cation.

Its subcellular location is the cytoplasm. The catalysed reaction is NAD(+) + ATP = ADP + NADP(+) + H(+). In terms of biological role, involved in the regulation of the intracellular balance of NAD and NADP, and is a key enzyme in the biosynthesis of NADP. Catalyzes specifically the phosphorylation on 2'-hydroxyl of the adenosine moiety of NAD to yield NADP. This is NAD kinase 2 from Bacillus subtilis (strain 168).